We begin with the raw amino-acid sequence, 162 residues long: SCF ubiquitin ligase complex protein SKP1a (162 aa).

Position 2 is an N-acetylserine (Ser2). The segment at 100 to 162 is interaction with the F-box domain of F-box proteins; that stretch reads ILAANYLDIK…NEWCEDKGGN (63 aa). 4-hydroxyproline is present on Pro143. O-linked (GlcNAc...) hydroxyproline glycosylation is present at Pro143.

It belongs to the SKP1 family. As to quaternary structure, multiprotein complex (SCF) with cullin and F-box-containing protein. Capable of undergoing aggregation. In terms of processing, O-linked glycan consists of linear Gal-Gal-Fuc-Gal-GlcNAc. Post-translationally, fpaA and fpaB seem to be identically glycosylated. Glycosylation is required for nuclear enrichment. Hydroxylated by phyA.

It localises to the cytoplasm. It is found in the nucleus. In Dictyostelium discoideum (Social amoeba), this protein is SCF ubiquitin ligase complex protein SKP1a (fpaA).